Reading from the N-terminus, the 65-residue chain is Hirudin-3A' (65 aa).

Residues 1–3 are interaction with thrombin active site; the sequence is VVY. 3 cysteine pairs are disulfide-bonded: Cys-6–Cys-14, Cys-16–Cys-28, and Cys-22–Cys-39. The segment at 32 to 65 is disordered; that stretch reads SDGEKNECVTGEGTPKPQSHNDGDFEEIPEEYLQ. An O-linked (GalNAc...) threonine glycan is attached at Thr-45. The interaction with fibrinogen-binding exosite of thrombin stretch occupies residues 55–65; that stretch reads DFEEIPEEYLQ. Over residues 55 to 65 the composition is skewed to acidic residues; sequence DFEEIPEEYLQ. Tyr-63 bears the Sulfotyrosine mark.

Belongs to the protease inhibitor I14 (hirudin) family.

The protein resides in the secreted. Its function is as follows. Hirudin is a potent thrombin-specific protease inhibitor. It forms a stable non-covalent complex with alpha-thrombin, thereby abolishing its ability to cleave fibrinogen. The polypeptide is Hirudin-3A' (Hirudo medicinalis (Medicinal leech)).